A 253-amino-acid chain; its full sequence is Zinc import ATP-binding protein ZnuC (253 aa).

The region spanning 6–227 (VTLNKISVTF…FGNRGAEQLA (222 aa)) is the ABC transporter domain. ATP is bound at residue 38–45 (GPNGAGKS).

The protein belongs to the ABC transporter superfamily. Zinc importer (TC 3.A.1.15.5) family. The complex is composed of two ATP-binding proteins (ZnuC), two transmembrane proteins (ZnuB) and a solute-binding protein (ZnuA).

It localises to the cell inner membrane. It carries out the reaction Zn(2+)(out) + ATP(in) + H2O(in) = Zn(2+)(in) + ADP(in) + phosphate(in) + H(+)(in). Functionally, part of the ABC transporter complex ZnuABC involved in zinc import. Responsible for energy coupling to the transport system. The chain is Zinc import ATP-binding protein ZnuC from Yersinia pestis bv. Antiqua (strain Antiqua).